We begin with the raw amino-acid sequence, 1128 residues long: Large proline-rich protein BAG6 (1128 aa).

M1 bears the N-acetylmethionine mark. The Ubiquitin-like domain occupies 17 to 92; the sequence is LEVLVKTLDS…HLVERAPPQT (76 aa). 5 disordered regions span residues 87-126, 185-267, 380-435, 456-523, and 555-598; these read RAPPQTQLPSGASSGTGSASATHGGGPPPGTRGPGASVHD, CRGG…NHPS, VTMT…AASH, IQDS…ALPG, and PGMA…SASD. A compositionally biased stretch (low complexity) spans 95–108; it reads PSGASSGTGSASAT. Position 96 is a phosphoserine (S96). A Phosphothreonine modification is found at T117. Positions 189–201 are enriched in polar residues; that stretch reads SQAQHSQPPSQMP. Repeat unit 1 spans residues 236-265; it reads RASAQSPGLSPSGPAPAGPTPAPETNAPNH. Residues 236-630 are 4 X 29 AA approximate repeats; it reads RASAQSPGLS…MTSPTITVAM (395 aa). Residues 238–247 are compositionally biased toward low complexity; it reads SAQSPGLSPS. 2 stretches are compositionally biased toward pro residues: residues 248-257 and 388-402; these read GPAPAGPTPA and RPPPTPNAEAPPPGP. A compositionally biased stretch (low complexity) spans 403–412; the sequence is GQASSLAPSS. Repeat unit 2 spans residues 410 to 438; it reads PSSTTVESSTEGAPPPGPAPPPAASHPRV. 2 stretches are compositionally biased toward pro residues: residues 422 to 433 and 502 to 515; these read APPPGPAPPPAA and PTPPQSRPSHPGGP. The span at 564 to 581 shows a compositional bias: low complexity; it reads ATASASAGTTNTATTAGP. 2 consecutive repeat copies span residues 569–596 and 602–630. A compositionally biased stretch (pro residues) spans 583–594; it reads PGGPAQPPPPQP. Disordered stretches follow at residues 648 to 689 and 939 to 1128; these read QTAA…GLGP and VGDP…AEDP. Residues 652-677 show a composition bias toward pro residues; that stretch reads PPAPPPPPPPPPPAPEQQTAPPPGSP. The span at 678-688 shows a compositional bias: gly residues; that stretch reads PGGAGSPGGLG. Phosphoserine is present on residues S960 and S969. Over residues 999-1016 the composition is skewed to low complexity; the sequence is AAAETEPWAAAVPPEWVP. The segment at 1006–1036 is required for interaction with GET4; that stretch reads WAAAVPPEWVPIIQQDIQSQRKVKPQPPLSD. A Nuclear localization site motif is present at residues 1008 to 1050; it reads AAVPPEWVPIIQQDIQSQRKVKPQPPLSDAYLSGMPAKRRKTM. Residues 1018-1128 form a sufficient for the delivery of client proteins to the endoplasmic reticulum region; it reads IQQDIQSQRK…NAHRAFAEDP (111 aa). Phosphothreonine is present on T1049. The tract at residues 1054-1111 is BAG-similar domain, required and sufficient for interaction with UBL4A; sequence GPQLLLSEAVSRAAKAAGARPLTSPESLSRDLEAPEVQESYRQQLRADIQKRLQEDPN. Positions 1062 to 1072 are enriched in low complexity; it reads AVSRAAKAAGA. 2 positions are modified to phosphoserine: S1077 and S1113.

Component of the BAG6/BAT3 complex, also named BAT3 complex, at least composed of BAG6, UBL4A and GET4/TRC35. Interacts with GET4; the interaction is direct and localizes BAG6 in the cytosol. Interacts with UBL4A; the interaction is direct and required for UBL4A protein stability. Interacts with AIFM1. Interacts with HSPA2. Interacts with CTCFL. Interacts with p300/EP300. Interacts (via ubiquitin-like domain) with RNF126; required for BAG6-dependent ubiquitination of proteins mislocalized to the cytosol. Interacts (via ubiquitin-like domain) with SGTA; SGTA competes with RNF126 by binding the same region of BAG6, thereby promoting deubiquitination of BAG6-target proteins and rescuing them from degradation. Interacts with ricin A chain. Interacts with VCP and AMFR; both form the VCP/p97-AMFR/gp78 complex. Interacts with SYVN1. Interacts with USP13; the interaction is direct and may mediate UBL4A deubiquitination. Interacts with ZFAND2B. Interacts with KPNA2. Interacts with UBQLN4. Ricin can induce a cleavage by the caspase CASP3. The released C-terminal peptide induces apoptosis.

The protein localises to the cytoplasm. It is found in the cytosol. The protein resides in the nucleus. It localises to the secreted. Its subcellular location is the extracellular exosome. Functionally, ATP-independent molecular chaperone preventing the aggregation of misfolded and hydrophobic patches-containing proteins. Functions as part of a cytosolic protein quality control complex, the BAG6/BAT3 complex, which maintains these client proteins in a soluble state and participates in their proper delivery to the endoplasmic reticulum or alternatively can promote their sorting to the proteasome where they undergo degradation. The BAG6/BAT3 complex is involved in the post-translational delivery of tail-anchored/type II transmembrane proteins to the endoplasmic reticulum membrane. Recruited to ribosomes, it interacts with the transmembrane region of newly synthesized tail-anchored proteins and together with SGTA and ASNA1 mediates their delivery to the endoplasmic reticulum. Client proteins that cannot be properly delivered to the endoplasmic reticulum are ubiquitinated by RNF126, an E3 ubiquitin-protein ligase associated with BAG6 and are sorted to the proteasome. SGTA which prevents the recruitment of RNF126 to BAG6 may negatively regulate the ubiquitination and the proteasomal degradation of client proteins. Similarly, the BAG6/BAT3 complex also functions as a sorting platform for proteins of the secretory pathway that are mislocalized to the cytosol either delivering them to the proteasome for degradation or to the endoplasmic reticulum. The BAG6/BAT3 complex also plays a role in the endoplasmic reticulum-associated degradation (ERAD), a quality control mechanism that eliminates unwanted proteins of the endoplasmic reticulum through their retrotranslocation to the cytosol and their targeting to the proteasome. It maintains these retrotranslocated proteins in an unfolded yet soluble state condition in the cytosol to ensure their proper delivery to the proteasome. BAG6 is also required for selective ubiquitin-mediated degradation of defective nascent chain polypeptides by the proteasome. In this context, it may participate in the production of antigenic peptides and play a role in antigen presentation in immune response. BAG6 is also involved in endoplasmic reticulum stress-induced pre-emptive quality control, a mechanism that selectively attenuates the translocation of newly synthesized proteins into the endoplasmic reticulum and reroutes them to the cytosol for proteasomal degradation. BAG6 may ensure the proper degradation of these proteins and thereby protects the endoplasmic reticulum from protein overload upon stress. By inhibiting the polyubiquitination and subsequent proteasomal degradation of HSPA2 it may also play a role in the assembly of the synaptonemal complex during spermatogenesis. Also positively regulates apoptosis by interacting with and stabilizing the proapoptotic factor AIFM1. By controlling the steady-state expression of the IGF1R receptor, indirectly regulates the insulin-like growth factor receptor signaling pathway. Involved in DNA damage-induced apoptosis: following DNA damage, accumulates in the nucleus and forms a complex with p300/EP300, enhancing p300/EP300-mediated p53/TP53 acetylation leading to increase p53/TP53 transcriptional activity. When nuclear, may also act as a component of some chromatin regulator complex that regulates histone 3 'Lys-4' dimethylation (H3K4me2). Its function is as follows. Released extracellularly via exosomes, it is a ligand of the natural killer/NK cells receptor NCR3 and stimulates NK cells cytotoxicity. It may thereby trigger NK cells cytotoxicity against neighboring tumor cells and immature myeloid dendritic cells (DC). In terms of biological role, may mediate ricin-induced apoptosis. This chain is Large proline-rich protein BAG6, found in Sus scrofa (Pig).